We begin with the raw amino-acid sequence, 479 residues long: Sulfate adenylyltransferase subunit 1 (479 aa).

Residues 25–239 (KSLLRFLTCG…EVLETVDIQR (215 aa)) form the tr-type G domain. Positions 34-41 (GSVDDGKS) are G1. Position 34 to 41 (34 to 41 (GSVDDGKS)) interacts with GTP. A G2 region spans residues 92-96 (GITID). Residues 113 to 116 (DTPG) are G3. Residues 113–117 (DTPGH) and 168–171 (NKMD) each bind GTP. A G4 region spans residues 168–171 (NKMD). Residues 206 to 208 (SAL) are G5.

It belongs to the TRAFAC class translation factor GTPase superfamily. Classic translation factor GTPase family. CysN/NodQ subfamily. Heterodimer composed of CysD, the smaller subunit, and CysN.

It carries out the reaction sulfate + ATP + H(+) = adenosine 5'-phosphosulfate + diphosphate. Its pathway is sulfur metabolism; hydrogen sulfide biosynthesis; sulfite from sulfate: step 1/3. With CysD forms the ATP sulfurylase (ATPS) that catalyzes the adenylation of sulfate producing adenosine 5'-phosphosulfate (APS) and diphosphate, the first enzymatic step in sulfur assimilation pathway. APS synthesis involves the formation of a high-energy phosphoric-sulfuric acid anhydride bond driven by GTP hydrolysis by CysN coupled to ATP hydrolysis by CysD. The polypeptide is Sulfate adenylyltransferase subunit 1 (Salmonella dublin (strain CT_02021853)).